The primary structure comprises 397 residues: Serine protease MT3772 (397 aa).

Helical transmembrane passes span 9–29 (IAVLAVAFIAAISGWRAGALG), 32–52 (LSFGGVLLGATAGVLLAPHIV), 62–82 (LFAALFLILALVVVGEVAGVV), and 102–122 (VIGVGVQLVVVLTAAWLLAMP). A disulfide bond links Cys-214 and Cys-395. His-235 (proton acceptor) is an active-site residue. Residue Asp-264 is part of the active site. Ser-343 functions as the Charge relay system in the catalytic mechanism.

Belongs to the peptidase S1C family. As to quaternary structure, monomer.

The protein resides in the membrane. Required for M.tuberculosis resistance to oxidative stress in addition to its role in resistance to acid, which is essential for virulence. The protein is Serine protease MT3772 of Mycobacterium tuberculosis (strain CDC 1551 / Oshkosh).